The primary structure comprises 458 residues: Argininosuccinate lyase (458 aa).

The protein belongs to the lyase 1 family. Argininosuccinate lyase subfamily.

The protein localises to the cytoplasm. It catalyses the reaction 2-(N(omega)-L-arginino)succinate = fumarate + L-arginine. It participates in amino-acid biosynthesis; L-arginine biosynthesis; L-arginine from L-ornithine and carbamoyl phosphate: step 3/3. The sequence is that of Argininosuccinate lyase from Neisseria gonorrhoeae (strain ATCC 700825 / FA 1090).